A 350-amino-acid polypeptide reads, in one-letter code: Gene 40 protein (350 aa).

237–244 (AVKESGKT) provides a ligand contact to ATP.

This Bacillus phage SP01 (Bacteriophage SP01) protein is Gene 40 protein (40).